A 95-amino-acid polypeptide reads, in one-letter code: Large ribosomal subunit protein bL27 (95 aa).

A propeptide spanning residues 1-8 (MEMNLQFF) is cleaved from the precursor. The disordered stretch occupies residues 1 to 34 (MEMNLQFFSHHKGGGSTSNGRDSAGRRLGTKRAD).

The protein belongs to the bacterial ribosomal protein bL27 family. The N-terminus is cleaved by ribosomal processing cysteine protease Prp.

In Pediococcus pentosaceus (strain ATCC 25745 / CCUG 21536 / LMG 10740 / 183-1w), this protein is Large ribosomal subunit protein bL27.